We begin with the raw amino-acid sequence, 467 residues long: ATP synthase subunit beta (467 aa).

152–159 (GGAGVGKT) lines the ATP pocket.

The protein belongs to the ATPase alpha/beta chains family. As to quaternary structure, F-type ATPases have 2 components, CF(1) - the catalytic core - and CF(0) - the membrane proton channel. CF(1) has five subunits: alpha(3), beta(3), gamma(1), delta(1), epsilon(1). CF(0) has three main subunits: a(1), b(2) and c(9-12). The alpha and beta chains form an alternating ring which encloses part of the gamma chain. CF(1) is attached to CF(0) by a central stalk formed by the gamma and epsilon chains, while a peripheral stalk is formed by the delta and b chains.

The protein localises to the cell membrane. It carries out the reaction ATP + H2O + 4 H(+)(in) = ADP + phosphate + 5 H(+)(out). Produces ATP from ADP in the presence of a proton gradient across the membrane. The catalytic sites are hosted primarily by the beta subunits. This chain is ATP synthase subunit beta, found in Caldicellulosiruptor saccharolyticus (strain ATCC 43494 / DSM 8903 / Tp8T 6331).